A 261-amino-acid chain; its full sequence is Ribosomal RNA small subunit methyltransferase A (261 aa).

6 residues coordinate S-adenosyl-L-methionine: Asn20, Leu22, Gly47, Glu68, Asp90, and Asn110.

It belongs to the class I-like SAM-binding methyltransferase superfamily. rRNA adenine N(6)-methyltransferase family. RsmA subfamily.

The protein resides in the cytoplasm. The catalysed reaction is adenosine(1518)/adenosine(1519) in 16S rRNA + 4 S-adenosyl-L-methionine = N(6)-dimethyladenosine(1518)/N(6)-dimethyladenosine(1519) in 16S rRNA + 4 S-adenosyl-L-homocysteine + 4 H(+). In terms of biological role, specifically dimethylates two adjacent adenosines (A1518 and A1519) in the loop of a conserved hairpin near the 3'-end of 16S rRNA in the 30S particle. May play a critical role in biogenesis of 30S subunits. This is Ribosomal RNA small subunit methyltransferase A from Prosthecochloris aestuarii (strain DSM 271 / SK 413).